Consider the following 412-residue polypeptide: Multifunctional CCA protein (412 aa).

ATP contacts are provided by glycine 8 and arginine 11. CTP contacts are provided by glycine 8 and arginine 11. Residues aspartate 21 and aspartate 23 each coordinate Mg(2+). 3 residues coordinate ATP: arginine 91, arginine 137, and arginine 140. Residues arginine 91, arginine 137, and arginine 140 each contribute to the CTP site. An HD domain is found at 228-329 (TGIHTLMTLS…VKLFDSIDAW (102 aa)).

This sequence belongs to the tRNA nucleotidyltransferase/poly(A) polymerase family. Bacterial CCA-adding enzyme type 1 subfamily. Monomer. Can also form homodimers and oligomers. Mg(2+) is required as a cofactor. Ni(2+) serves as cofactor.

The catalysed reaction is a tRNA precursor + 2 CTP + ATP = a tRNA with a 3' CCA end + 3 diphosphate. The enzyme catalyses a tRNA with a 3' CCA end + 2 CTP + ATP = a tRNA with a 3' CCACCA end + 3 diphosphate. Functionally, catalyzes the addition and repair of the essential 3'-terminal CCA sequence in tRNAs without using a nucleic acid template. Adds these three nucleotides in the order of C, C, and A to the tRNA nucleotide-73, using CTP and ATP as substrates and producing inorganic pyrophosphate. tRNA 3'-terminal CCA addition is required both for tRNA processing and repair. Also involved in tRNA surveillance by mediating tandem CCA addition to generate a CCACCA at the 3' terminus of unstable tRNAs. While stable tRNAs receive only 3'-terminal CCA, unstable tRNAs are marked with CCACCA and rapidly degraded. In Escherichia coli O1:K1 / APEC, this protein is Multifunctional CCA protein.